We begin with the raw amino-acid sequence, 223 residues long: Thiamine-phosphate synthase (223 aa).

Residues 42-46 (QLRDK) and N83 each bind 4-amino-2-methyl-5-(diphosphooxymethyl)pyrimidine. Mg(2+) contacts are provided by D84 and D103. S122 is a binding site for 4-amino-2-methyl-5-(diphosphooxymethyl)pyrimidine. 148–150 (TPT) is a 2-[(2R,5Z)-2-carboxy-4-methylthiazol-5(2H)-ylidene]ethyl phosphate binding site. 4-amino-2-methyl-5-(diphosphooxymethyl)pyrimidine is bound at residue K151. A 2-[(2R,5Z)-2-carboxy-4-methylthiazol-5(2H)-ylidene]ethyl phosphate-binding site is contributed by G179.

The protein belongs to the thiamine-phosphate synthase family. The cofactor is Mg(2+).

It catalyses the reaction 2-[(2R,5Z)-2-carboxy-4-methylthiazol-5(2H)-ylidene]ethyl phosphate + 4-amino-2-methyl-5-(diphosphooxymethyl)pyrimidine + 2 H(+) = thiamine phosphate + CO2 + diphosphate. The enzyme catalyses 2-(2-carboxy-4-methylthiazol-5-yl)ethyl phosphate + 4-amino-2-methyl-5-(diphosphooxymethyl)pyrimidine + 2 H(+) = thiamine phosphate + CO2 + diphosphate. It carries out the reaction 4-methyl-5-(2-phosphooxyethyl)-thiazole + 4-amino-2-methyl-5-(diphosphooxymethyl)pyrimidine + H(+) = thiamine phosphate + diphosphate. It functions in the pathway cofactor biosynthesis; thiamine diphosphate biosynthesis; thiamine phosphate from 4-amino-2-methyl-5-diphosphomethylpyrimidine and 4-methyl-5-(2-phosphoethyl)-thiazole: step 1/1. Its function is as follows. Condenses 4-methyl-5-(beta-hydroxyethyl)thiazole monophosphate (THZ-P) and 2-methyl-4-amino-5-hydroxymethyl pyrimidine pyrophosphate (HMP-PP) to form thiamine monophosphate (TMP). The sequence is that of Thiamine-phosphate synthase from Mycobacterium avium (strain 104).